The following is a 51-amino-acid chain: Insulin-1 (51 aa).

Cystine bridges form between Cys-8–Cys-37, Cys-20–Cys-50, and Cys-36–Cys-41.

It belongs to the insulin family. In terms of assembly, heterodimer of a B chain and an A chain linked by two disulfide bonds.

The protein localises to the secreted. In terms of biological role, insulin decreases blood glucose concentration. It increases cell permeability to monosaccharides, amino acids and fatty acids. It accelerates glycolysis, the pentose phosphate cycle, and glycogen synthesis in liver. This is Insulin-1 (ins1) from Batrachoididae sp. (Toadfish).